The chain runs to 196 residues: Endoribonuclease YbeY (196 aa).

Zn(2+) is bound by residues His120, His124, and His130.

The protein belongs to the endoribonuclease YbeY family. It depends on Zn(2+) as a cofactor.

The protein localises to the cytoplasm. Functionally, single strand-specific metallo-endoribonuclease involved in late-stage 70S ribosome quality control and in maturation of the 3' terminus of the 16S rRNA. This chain is Endoribonuclease YbeY, found in Corynebacterium glutamicum (strain R).